The chain runs to 171 residues: 3-hydroxydecanoyl-[acyl-carrier-protein] dehydratase (171 aa).

H70 is an active-site residue.

It belongs to the thioester dehydratase family. FabA subfamily. Homodimer.

It localises to the cytoplasm. It carries out the reaction a (3R)-hydroxyacyl-[ACP] = a (2E)-enoyl-[ACP] + H2O. The catalysed reaction is (3R)-hydroxydecanoyl-[ACP] = (2E)-decenoyl-[ACP] + H2O. The enzyme catalyses (2E)-decenoyl-[ACP] = (3Z)-decenoyl-[ACP]. The protein operates within lipid metabolism; fatty acid biosynthesis. In terms of biological role, necessary for the introduction of cis unsaturation into fatty acids. Catalyzes the dehydration of (3R)-3-hydroxydecanoyl-ACP to E-(2)-decenoyl-ACP and then its isomerization to Z-(3)-decenoyl-ACP. Can catalyze the dehydratase reaction for beta-hydroxyacyl-ACPs with saturated chain lengths up to 16:0, being most active on intermediate chain length. This is 3-hydroxydecanoyl-[acyl-carrier-protein] dehydratase from Marinomonas sp. (strain MWYL1).